Here is a 374-residue protein sequence, read N- to C-terminus: N5-carboxyaminoimidazole ribonucleotide synthase (374 aa).

Residues R108, K148, 153-159, 183-186, E191, H214, and 266-267 contribute to the ATP site; these read GYDGKGQ, EKYL, and NE. Residues 112-296 form the ATP-grasp domain; sequence KETLKSAGTK…QFDTHILAVT (185 aa).

The protein belongs to the PurK/PurT family. In terms of assembly, homodimer.

The catalysed reaction is 5-amino-1-(5-phospho-beta-D-ribosyl)imidazole + hydrogencarbonate + ATP = 5-carboxyamino-1-(5-phospho-D-ribosyl)imidazole + ADP + phosphate + 2 H(+). It functions in the pathway purine metabolism; IMP biosynthesis via de novo pathway; 5-amino-1-(5-phospho-D-ribosyl)imidazole-4-carboxylate from 5-amino-1-(5-phospho-D-ribosyl)imidazole (N5-CAIR route): step 1/2. Functionally, catalyzes the ATP-dependent conversion of 5-aminoimidazole ribonucleotide (AIR) and HCO(3)(-) to N5-carboxyaminoimidazole ribonucleotide (N5-CAIR). This is N5-carboxyaminoimidazole ribonucleotide synthase from Staphylococcus aureus (strain COL).